A 113-amino-acid chain; its full sequence is MNYTLSKRLCLTAMLTLAAVVYTTSAFAETSKLVIESGDSAQSRQEAAMEKEQWNDTRSLRQKVNTRAEKEWDKADAAFDNRDKCEQSANINAYWEPNTLRCLDRRTGRVITP.

An N-terminal signal peptide occupies residues methionine 1–alanine 28.

It belongs to the UPF0482 family.

The protein is UPF0482 protein YnfB of Salmonella arizonae (strain ATCC BAA-731 / CDC346-86 / RSK2980).